The primary structure comprises 169 residues: S-ribosylhomocysteine lyase (169 aa).

The Fe cation site is built by His-54, His-58, and Cys-128.

Belongs to the LuxS family. As to quaternary structure, homodimer. Fe cation serves as cofactor.

It carries out the reaction S-(5-deoxy-D-ribos-5-yl)-L-homocysteine = (S)-4,5-dihydroxypentane-2,3-dione + L-homocysteine. Functionally, involved in the synthesis of autoinducer 2 (AI-2) which is secreted by bacteria and is used to communicate both the cell density and the metabolic potential of the environment. The regulation of gene expression in response to changes in cell density is called quorum sensing. Catalyzes the transformation of S-ribosylhomocysteine (RHC) to homocysteine (HC) and 4,5-dihydroxy-2,3-pentadione (DPD). The chain is S-ribosylhomocysteine lyase from Aeromonas hydrophila subsp. hydrophila (strain ATCC 7966 / DSM 30187 / BCRC 13018 / CCUG 14551 / JCM 1027 / KCTC 2358 / NCIMB 9240 / NCTC 8049).